The chain runs to 370 residues: Anhydro-N-acetylmuramic acid kinase (370 aa).

ATP is bound at residue 12 to 19 (GTSLDGVD).

Belongs to the anhydro-N-acetylmuramic acid kinase family.

It carries out the reaction 1,6-anhydro-N-acetyl-beta-muramate + ATP + H2O = N-acetyl-D-muramate 6-phosphate + ADP + H(+). It participates in amino-sugar metabolism; 1,6-anhydro-N-acetylmuramate degradation. The protein operates within cell wall biogenesis; peptidoglycan recycling. Functionally, catalyzes the specific phosphorylation of 1,6-anhydro-N-acetylmuramic acid (anhMurNAc) with the simultaneous cleavage of the 1,6-anhydro ring, generating MurNAc-6-P. Is required for the utilization of anhMurNAc either imported from the medium or derived from its own cell wall murein, and thus plays a role in cell wall recycling. The sequence is that of Anhydro-N-acetylmuramic acid kinase from Proteus mirabilis (strain HI4320).